Consider the following 845-residue polypeptide: MANFLKKMIENDKKELRRLEKIADKIDAHASAMEQLSDEQLREKTDEFKARYQKGETLDELLPEAFAVVREAAKRVLGLFPYRVQLMGGIVLHDGNIPEMRTGEGKTLTATMPVYLNALSGEGVHVVTVNEYLATRDSNEMGELYNFLGLSVGLNINSKSSDEKREAYNCDITYSTNNELGFDYLRDNMVVYRSQMVQRPLNYAIVDEVDSILIDEARTPLIISGQAEKSTALYTRADNFVKRLKEDEDYKIDIQSKTIGLTEAGIEKAEQTFGLDNLYDIENTALTHHLDQALRANYIMLLDIDYVVQDNKVLIVDQFTGRIMDGRRYSDGLHQAIEAKEGVEIEDETKTMATITFQNYFRMYKKLAGMTGTAKTEEEEFREIYNIQVIQIPTNRPIIRDDRPDLLYPTLESKFNAVVEDIKERYHKGQPVLVGTVAVETSELLSDKLNAAKIPHEVLNAKNHFKEAEIIMNAGQKGAVTIATNMAGRGTDIKLGLGVLELGGLAVIGTERHESRRIDNQLRGRAGRQGDPGVSQFYLSLEDDLMKRFGSERIKTFLERMNVQEEDAVIQSKMFTRQVESAQKRVEGNNYDTRKNVLQYDDVMREQREVIYAQRQEVIMEENDLSDVLMGMVKRTIGRVVDSHTQLEKEEWNLDGIVDFAASTLVHEDTISKKDLENKSAEEIKDYLVARAQEVFEEKSQQLNGQEQLLEFEKVVILRVVDTKWTDHIDAMDQLRQSVGLRAYGQNNPLVEYQTEGYSMYNNMVGSIEYEVTRLFMKSEIRQNVQREQVAQGQAEHPETEQDAAAQSNTSAKRQPVRVDKKVGRNDLCPCGSGKKFKNCHGRNA.

Residues Gln85, 103-107 (GEGKT), and Asp492 contribute to the ATP site. The interval 787-845 (REQVAQGQAEHPETEQDAAAQSNTSAKRQPVRVDKKVGRNDLCPCGSGKKFKNCHGRNA) is disordered. Zn(2+) contacts are provided by Cys829, Cys831, Cys840, and His841. A compositionally biased stretch (basic residues) spans 835–845 (KKFKNCHGRNA).

The protein belongs to the SecA family. In terms of assembly, monomer and homodimer. Part of the essential Sec protein translocation apparatus which comprises SecA, SecYEG and auxiliary proteins SecDF. Other proteins may also be involved. Zn(2+) serves as cofactor.

It localises to the cell membrane. The protein localises to the cytoplasm. The catalysed reaction is ATP + H2O + cellular proteinSide 1 = ADP + phosphate + cellular proteinSide 2.. Functionally, part of the Sec protein translocase complex. Interacts with the SecYEG preprotein conducting channel. Has a central role in coupling the hydrolysis of ATP to the transfer of proteins into and across the cell membrane, serving as an ATP-driven molecular motor driving the stepwise translocation of polypeptide chains across the membrane. The chain is Protein translocase subunit SecA from Enterococcus faecalis (strain ATCC 700802 / V583).